The sequence spans 386 residues: Protein phosphatase methylesterase 1 (386 aa).

Residues 1–38 form a disordered region; the sequence is MSALEKSMHLGRLPSRPPLPGSGGSQSGAKMRMGPGRK. Position 15 is a phosphoserine (Ser-15). Arg-16 carries the asymmetric dimethylarginine; alternate modification. Arg-16 carries the post-translational modification Omega-N-methylarginine; alternate. Residue Ser-156 is part of the active site. A compositionally biased stretch (acidic residues) spans 255–265; it reads IEEEEEDEEGS. The disordered stretch occupies residues 255-280; it reads IEEEEEDEEGSESVNKRKKEDDMETK. Basic and acidic residues predominate over residues 268–280; sequence VNKRKKEDDMETK. Residue His-349 is part of the active site.

Belongs to the AB hydrolase superfamily. Binds PPP2CA and PPP2CB. Phosphorylated by SIK1 following increases in intracellular sodium, leading to dissociation from the protein phosphatase 2A (PP2A) complex and subsequent dephosphorylation of sodium/potassium-transporting ATPase ATP1A1.

It catalyses the reaction [phosphatase 2A protein]-C-terminal L-leucine methyl ester + H2O = [phosphatase 2A protein]-C-terminal L-leucine + methanol + H(+). Its function is as follows. Demethylates proteins that have been reversibly carboxymethylated. Demethylates PPP2CB (in vitro) and PPP2CA. Binding to PPP2CA displaces the manganese ion and inactivates the enzyme. This is Protein phosphatase methylesterase 1 (Ppme1) from Rattus norvegicus (Rat).